The primary structure comprises 224 residues: Deoxyribose-phosphate aldolase (224 aa).

Asp-98 serves as the catalytic Proton donor/acceptor. Lys-159 (schiff-base intermediate with acetaldehyde) is an active-site residue. Residue Lys-189 is the Proton donor/acceptor of the active site.

The protein belongs to the DeoC/FbaB aldolase family. DeoC type 1 subfamily.

It localises to the cytoplasm. It catalyses the reaction 2-deoxy-D-ribose 5-phosphate = D-glyceraldehyde 3-phosphate + acetaldehyde. Its pathway is carbohydrate degradation; 2-deoxy-D-ribose 1-phosphate degradation; D-glyceraldehyde 3-phosphate and acetaldehyde from 2-deoxy-alpha-D-ribose 1-phosphate: step 2/2. Its function is as follows. Catalyzes a reversible aldol reaction between acetaldehyde and D-glyceraldehyde 3-phosphate to generate 2-deoxy-D-ribose 5-phosphate. The chain is Deoxyribose-phosphate aldolase from Methanothermobacter thermautotrophicus (strain ATCC 29096 / DSM 1053 / JCM 10044 / NBRC 100330 / Delta H) (Methanobacterium thermoautotrophicum).